The primary structure comprises 163 residues: MASMTDQQAEARAFLSEEMIAEFKAAFDMFDADGGGDISTKELGTVMRMLGQNPTKEELDAIIEEVDEDGSGTIDFEEFLVMMVRQMKEDAKGKSEEELANCFRIFDKNADGFIDIEELGEILRATGEHVTEEDIEDLMKDSDKNNDGRIDFDEFLKMMEGVQ.

The residue at position 2 (A2) is a Blocked amino end (Ala). 4 consecutive EF-hand domains span residues 18–53 (EMIA…LGQN), 54–89 (PTKE…QMKE), 94–129 (KSEE…TGEH), and 130–163 (VTEE…EGVQ). 18 residues coordinate Ca(2+): D31, D33, D37, E42, D67, D69, S71, T73, E78, D107, N109, D111, E118, D143, N145, D147, R149, and E154.

Belongs to the troponin C family.

Troponin is the central regulatory protein of striated muscle contraction. Tn consists of three components: Tn-I which is the inhibitor of actomyosin ATPase, Tn-T which contains the binding site for tropomyosin and Tn-C. The binding of calcium to Tn-C abolishes the inhibitory action of Tn on actin filaments. The polypeptide is Troponin C, skeletal muscle (TNNC2) (Gallus gallus (Chicken)).